The following is a 371-amino-acid chain: Histidinol-phosphate aminotransferase (371 aa).

Residue lysine 228 is modified to N6-(pyridoxal phosphate)lysine.

It belongs to the class-II pyridoxal-phosphate-dependent aminotransferase family. Histidinol-phosphate aminotransferase subfamily. Pyridoxal 5'-phosphate is required as a cofactor.

The catalysed reaction is L-histidinol phosphate + 2-oxoglutarate = 3-(imidazol-4-yl)-2-oxopropyl phosphate + L-glutamate. The protein operates within amino-acid biosynthesis; L-histidine biosynthesis; L-histidine from 5-phospho-alpha-D-ribose 1-diphosphate: step 7/9. The sequence is that of Histidinol-phosphate aminotransferase from Methanococcus maripaludis (strain C7 / ATCC BAA-1331).